The following is a 490-amino-acid chain: Glutamyl-tRNA(Gln) amidotransferase subunit A (490 aa).

Active-site charge relay system residues include K78 and S158. S182 acts as the Acyl-ester intermediate in catalysis.

It belongs to the amidase family. GatA subfamily. As to quaternary structure, heterotrimer of A, B and C subunits.

The catalysed reaction is L-glutamyl-tRNA(Gln) + L-glutamine + ATP + H2O = L-glutaminyl-tRNA(Gln) + L-glutamate + ADP + phosphate + H(+). Allows the formation of correctly charged Gln-tRNA(Gln) through the transamidation of misacylated Glu-tRNA(Gln) in organisms which lack glutaminyl-tRNA synthetase. The reaction takes place in the presence of glutamine and ATP through an activated gamma-phospho-Glu-tRNA(Gln). This chain is Glutamyl-tRNA(Gln) amidotransferase subunit A, found in Caulobacter sp. (strain K31).